We begin with the raw amino-acid sequence, 310 residues long: tRNA dimethylallyltransferase (310 aa).

15-22 (GATASGKT) is an ATP binding site. 17 to 22 (TASGKT) is a substrate binding site.

Belongs to the IPP transferase family. As to quaternary structure, monomer. It depends on Mg(2+) as a cofactor.

It carries out the reaction adenosine(37) in tRNA + dimethylallyl diphosphate = N(6)-dimethylallyladenosine(37) in tRNA + diphosphate. Catalyzes the transfer of a dimethylallyl group onto the adenine at position 37 in tRNAs that read codons beginning with uridine, leading to the formation of N6-(dimethylallyl)adenosine (i(6)A). The sequence is that of tRNA dimethylallyltransferase from Nocardioides sp. (strain ATCC BAA-499 / JS614).